The primary structure comprises 346 residues: MKGLPALLLLLIGCVSSFGSQDVPLRVLAEKLNIHIGFAAGNNFWSLPDAEKYMEVAKREFNILTPGNQMKWDTIHPERNRYNFEPAEKHVEFALKNDMIVHGHTLVWHNQLPGWLTGQEWSKEELLNILEDHVKTVVSHFRGRVKIWDVVNEAVSDSGTYRESIWYRTIGPEYIEKALIWAKEADPDAILIYNDYNIEEINAKSNFVYNMIKNLREKGVPIDGIGFQMHIDYRGINYESFKKNLERFAELGLQIYITEMDRGFPLGGSVGYYLKKQAEVYRRIFEICLDNPAVRAIQFWGFTDKYSWVPGFFKGYGKALIFDENYNPKPCYFAIRELMEEKLKER.

The signal sequence occupies residues 1 to 19 (MKGLPALLLLLIGCVSSFG). The 298-residue stretch at 41 to 338 (GNNFWSLPDA…KPCYFAIREL (298 aa)) folds into the GH10 domain. E153 acts as the Proton donor in catalysis. The Nucleophile role is filled by E259.

Belongs to the glycosyl hydrolase 10 (cellulase F) family.

It carries out the reaction Endohydrolysis of (1-&gt;4)-beta-D-xylosidic linkages in xylans.. The protein is Endo-1,4-beta-xylanase B (xynB) of Thermotoga neapolitana.